Reading from the N-terminus, the 136-residue chain is Evasin P991 (136 aa).

The first 28 residues, 1–28, serve as a signal peptide directing secretion; sequence MHSTIVYACLLALAVFVALHGTPLAALA. Residues Asn-41, Asn-61, Asn-64, Asn-78, Asn-92, Asn-100, and Asn-122 are each glycosylated (N-linked (GlcNAc...) asparagine). Disulfide bonds link Cys-55-Cys-77, Cys-73-Cys-114, Cys-90-Cys-119, and Cys-109-Cys-128.

Its subcellular location is the secreted. Functionally, salivary chemokine-binding protein which has chemokine-neutralizing activity and binds to host chemokines CCL2, CCL3, CCL3L1, CCL4, CCL4L1, CCL5, CCL6, CCL7, CCL8, CCL9, CCL11, CCL12, CCL13, CCL14, CCL16, CCL17, CCL18, CCL19, CCL22, CCL23, CCL24 and CCL27. The sequence is that of Evasin P991 from Amblyomma cajennense (Cayenne tick).